A 252-amino-acid polypeptide reads, in one-letter code: Imidazole glycerol phosphate synthase subunit HisF (252 aa).

Catalysis depends on residues Asp11 and Asp130.

Belongs to the HisA/HisF family. Heterodimer of HisH and HisF.

It localises to the cytoplasm. The enzyme catalyses 5-[(5-phospho-1-deoxy-D-ribulos-1-ylimino)methylamino]-1-(5-phospho-beta-D-ribosyl)imidazole-4-carboxamide + L-glutamine = D-erythro-1-(imidazol-4-yl)glycerol 3-phosphate + 5-amino-1-(5-phospho-beta-D-ribosyl)imidazole-4-carboxamide + L-glutamate + H(+). Its pathway is amino-acid biosynthesis; L-histidine biosynthesis; L-histidine from 5-phospho-alpha-D-ribose 1-diphosphate: step 5/9. Its function is as follows. IGPS catalyzes the conversion of PRFAR and glutamine to IGP, AICAR and glutamate. The HisF subunit catalyzes the cyclization activity that produces IGP and AICAR from PRFAR using the ammonia provided by the HisH subunit. The sequence is that of Imidazole glycerol phosphate synthase subunit HisF from Lacticaseibacillus paracasei (strain ATCC 334 / BCRC 17002 / CCUG 31169 / CIP 107868 / KCTC 3260 / NRRL B-441) (Lactobacillus paracasei).